The sequence spans 505 residues: Glycerol kinase 1 (505 aa).

Threonine 13 lines the ADP pocket. Residues threonine 13, threonine 14, and serine 15 each contribute to the ATP site. Sn-glycerol 3-phosphate is bound at residue threonine 13. Arginine 17 is an ADP binding site. Residues arginine 83, glutamate 84, and tyrosine 135 each contribute to the sn-glycerol 3-phosphate site. Arginine 83, glutamate 84, and tyrosine 135 together coordinate glycerol. Histidine 231 is modified (phosphohistidine; by HPr). Aspartate 245 lines the sn-glycerol 3-phosphate pocket. Positions 245 and 246 each coordinate glycerol. Threonine 267 and glycine 310 together coordinate ADP. The ATP site is built by threonine 267, glycine 310, glutamine 314, and glycine 411. Glycine 411 and asparagine 415 together coordinate ADP.

The protein belongs to the FGGY kinase family. As to quaternary structure, homotetramer and homodimer (in equilibrium). Post-translationally, the phosphoenolpyruvate-dependent sugar phosphotransferase system (PTS), including enzyme I, and histidine-containing protein (HPr) are required for the phosphorylation, which leads to the activation of the enzyme.

The enzyme catalyses glycerol + ATP = sn-glycerol 3-phosphate + ADP + H(+). Its pathway is polyol metabolism; glycerol degradation via glycerol kinase pathway; sn-glycerol 3-phosphate from glycerol: step 1/1. Its activity is regulated as follows. Activated by phosphorylation and inhibited by fructose 1,6-bisphosphate (FBP). In terms of biological role, key enzyme in the regulation of glycerol uptake and metabolism. Catalyzes the phosphorylation of glycerol to yield sn-glycerol 3-phosphate. In Lactiplantibacillus plantarum (strain ATCC BAA-793 / NCIMB 8826 / WCFS1) (Lactobacillus plantarum), this protein is Glycerol kinase 1.